The following is a 250-amino-acid chain: Hydroxyethylthiazole kinase (250 aa).

Residue methionine 39 coordinates substrate. 2 residues coordinate ATP: arginine 114 and threonine 159. Position 186 (glycine 186) interacts with substrate.

This sequence belongs to the Thz kinase family. The cofactor is Mg(2+).

The enzyme catalyses 5-(2-hydroxyethyl)-4-methylthiazole + ATP = 4-methyl-5-(2-phosphooxyethyl)-thiazole + ADP + H(+). Its pathway is cofactor biosynthesis; thiamine diphosphate biosynthesis; 4-methyl-5-(2-phosphoethyl)-thiazole from 5-(2-hydroxyethyl)-4-methylthiazole: step 1/1. Catalyzes the phosphorylation of the hydroxyl group of 4-methyl-5-beta-hydroxyethylthiazole (THZ). The sequence is that of Hydroxyethylthiazole kinase from Lactococcus lactis subsp. cremoris (strain SK11).